The following is a 324-amino-acid chain: Phospho-N-acetylmuramoyl-pentapeptide-transferase (324 aa).

Helical transmembrane passes span V13–P33, G57–I77, G85–L105, M121–T141, I143–V163, I179–F199, T201–L221, L238–V260, and V303–A323.

Belongs to the glycosyltransferase 4 family. MraY subfamily. It depends on Mg(2+) as a cofactor.

Its subcellular location is the cell membrane. It catalyses the reaction UDP-N-acetyl-alpha-D-muramoyl-L-alanyl-gamma-D-glutamyl-meso-2,6-diaminopimeloyl-D-alanyl-D-alanine + di-trans,octa-cis-undecaprenyl phosphate = di-trans,octa-cis-undecaprenyl diphospho-N-acetyl-alpha-D-muramoyl-L-alanyl-D-glutamyl-meso-2,6-diaminopimeloyl-D-alanyl-D-alanine + UMP. It participates in cell wall biogenesis; peptidoglycan biosynthesis. Its function is as follows. Catalyzes the initial step of the lipid cycle reactions in the biosynthesis of the cell wall peptidoglycan: transfers peptidoglycan precursor phospho-MurNAc-pentapeptide from UDP-MurNAc-pentapeptide onto the lipid carrier undecaprenyl phosphate, yielding undecaprenyl-pyrophosphoryl-MurNAc-pentapeptide, known as lipid I. The chain is Phospho-N-acetylmuramoyl-pentapeptide-transferase from Clostridium botulinum (strain Eklund 17B / Type B).